A 454-amino-acid chain; its full sequence is Bifunctional protein GlmU (454 aa).

Positions 1–227 are pyrophosphorylase; the sequence is MSKLSVVILA…MMEVEGANNR (227 aa). UDP-N-acetyl-alpha-D-glucosamine contacts are provided by residues 9–12, Lys-23, Gln-74, 79–80, 101–103, Gly-138, Glu-152, Asn-167, and Asn-225; these read LAAG, GT, and YGD. Asp-103 contacts Mg(2+). Mg(2+) is bound at residue Asn-225. The linker stretch occupies residues 228–248; the sequence is LQLAALERYFQRKQATALLLA. The tract at residues 249-454 is N-acetyltransferase; sequence GVSLADPERF…ADWERPSKKK (206 aa). UDP-N-acetyl-alpha-D-glucosamine-binding residues include Arg-331 and Lys-349. The active-site Proton acceptor is His-361. UDP-N-acetyl-alpha-D-glucosamine contacts are provided by Tyr-364 and Asn-375. Acetyl-CoA contacts are provided by residues Ala-378, 384–385, Ser-403, Ala-421, and Arg-438; that span reads NY.

In the N-terminal section; belongs to the N-acetylglucosamine-1-phosphate uridyltransferase family. It in the C-terminal section; belongs to the transferase hexapeptide repeat family. In terms of assembly, homotrimer. Requires Mg(2+) as cofactor.

The protein localises to the cytoplasm. It carries out the reaction alpha-D-glucosamine 1-phosphate + acetyl-CoA = N-acetyl-alpha-D-glucosamine 1-phosphate + CoA + H(+). The enzyme catalyses N-acetyl-alpha-D-glucosamine 1-phosphate + UTP + H(+) = UDP-N-acetyl-alpha-D-glucosamine + diphosphate. The protein operates within nucleotide-sugar biosynthesis; UDP-N-acetyl-alpha-D-glucosamine biosynthesis; N-acetyl-alpha-D-glucosamine 1-phosphate from alpha-D-glucosamine 6-phosphate (route II): step 2/2. It functions in the pathway nucleotide-sugar biosynthesis; UDP-N-acetyl-alpha-D-glucosamine biosynthesis; UDP-N-acetyl-alpha-D-glucosamine from N-acetyl-alpha-D-glucosamine 1-phosphate: step 1/1. Its pathway is bacterial outer membrane biogenesis; LPS lipid A biosynthesis. Catalyzes the last two sequential reactions in the de novo biosynthetic pathway for UDP-N-acetylglucosamine (UDP-GlcNAc). The C-terminal domain catalyzes the transfer of acetyl group from acetyl coenzyme A to glucosamine-1-phosphate (GlcN-1-P) to produce N-acetylglucosamine-1-phosphate (GlcNAc-1-P), which is converted into UDP-GlcNAc by the transfer of uridine 5-monophosphate (from uridine 5-triphosphate), a reaction catalyzed by the N-terminal domain. In Actinobacillus succinogenes (strain ATCC 55618 / DSM 22257 / CCUG 43843 / 130Z), this protein is Bifunctional protein GlmU.